The chain runs to 69 residues: Small integral membrane protein 20 (69 aa).

Residues 1 to 8 (MAAARNLR) are Mitochondrial matrix-facing. A helical membrane pass occupies residues 9–29 (TALIFGGFISMVGAAFYPIYF). Residues 30–69 (RPLMRLEEYQKEQAVNRAGIVQEDVQPPGLKVWSDPFGRK) lie on the Mitochondrial intermembrane side of the membrane. Phenylalanine 66 bears the Phenylalanine amide mark.

Component of the MITRAC (mitochondrial translation regulation assembly intermediate of cytochrome c oxidase complex) complex, the core components of this complex being COA3/MITRAC12 and COX14. Interacts with COA3/MITRAC12 and COX4I1. Directly interacts with newly synthesized MT-CO1/COX1. Highly expressed in the hypothalamus, the spinal cord, and sensory ganglia (at protein level). Also expressed on in the epidermis and dermis layers of the skin (at protein level). Expressed in preadipocytes and adipocytes (at protein level). Expressed in the ovary, specifically in granulosa cells of follicles that have passed the primary stage and in oocytes (at protein level).

It localises to the mitochondrion inner membrane. The protein resides in the secreted. Functionally, component of the MITRAC (mitochondrial translation regulation assembly intermediate of cytochrome c oxidase complex) complex, that regulates cytochrome c oxidase assembly. Promotes the progression of complex assembly after the association of MT-CO1/COX1 with COX4I1 and COX6C. Chaperone-like assembly factor required to stabilize newly synthesized MT-CO1/COX1 and to prevent its premature turnover. Its function is as follows. Peptide involved in a broad spectrum of regulatory functions. Is a ligand for GPR173. As part of the reproductive cycle, it regulates gonadotropin-releasing hormone (GnRH) signaling in the hypothalamus and pituitary gland which augments the release of luteinizing hormone. More specifically, it regulates the expression of transcription factors CEBPB and POU2F1/OCT1 through the cAMP-PKA signaling pathway, which subsequently regulate the expression of GNRHR and KISS1. Plays a protective role in memory retention through activation of GNRHR. Regulates the secretion of AVP by hypothalamic neurons. Plays a role in the transduction of the itch sensation. Induces anxiolytic effects, reducing behavior associated with anxiety. Regulates food intake as well as satiation and satiety by increasing Nucb2 expression in neurons. In the ovary, it regulates follicular growth by stimulating granulosa cell proliferation by increasing the expression of GPR173, CREB1, CYP19A1, KITLG, FSHR, and LHCGR. It also increases the production of estradiol (E2). In the heart, it regulates contractility and relaxation by activating the AKT1-NOS3 and MAPK1-MAPK3 signaling pathways. It also plays a cardioprotective role during ischemia, where it activates the SAFE and RISK pathways. Stimulates the proliferation and differentiation of preadipocytes. In pancreatic islet cells, it induces proliferation of islet cells as well as the production of INS through activation of the MAPK1-MAPK3 signaling pathways. The chain is Small integral membrane protein 20 from Mus musculus (Mouse).